The following is a 226-amino-acid chain: Lysoplasmalogenase TMEM86B (226 aa).

The Cytoplasmic portion of the chain corresponds to 1–23 (MDARKEGLPLETLFSDQYPQVRR). Residues 24 to 40 (WLAPFILACSLYFLLWI) traverse the membrane as a helical segment. The Extracellular segment spans residues 41–46 (PVDQPS). A helical transmembrane segment spans residues 47–68 (WVSALIKCQPILCLVVFLWAVA). Topologically, residues 69–74 (PGGSST) are cytoplasmic. The helical transmembrane segment at 75-93 (WLLQGALVCSAVGDACLIW) threads the bilayer. The Extracellular portion of the chain corresponds to 94 to 99 (PEAFFY). A helical transmembrane segment spans residues 100–117 (GTAAFSVAHLFYLGAFGL). At 118–123 (TPLQPG) the chain is on the cytoplasmic side. Residues 124–140 (LLLCTTLASLTYYSFLL) form a helical membrane-spanning segment. The Extracellular portion of the chain corresponds to 141 to 146 (LHLEQG). A helical transmembrane segment spans residues 147-163 (MVLPVMAYGLILNSMLW). The Cytoplasmic segment spans residues 164-171 (RSLVWGGS). The helical transmembrane segment at 172-188 (ASWGAVLFTFSDGVLAW) threads the bilayer. The Extracellular portion of the chain corresponds to 189-199 (DTFVYSLPFAR). The chain crosses the membrane as a helical span at residues 200 to 218 (LVTMSTYYAAQLLLILSAL). Over 219–226 (RNPGLKTH) the chain is Cytoplasmic.

Belongs to the TMEM86 family. As to quaternary structure, homodimer. In terms of tissue distribution, enriched in liver. Also detected in brain and testis.

It is found in the endoplasmic reticulum membrane. It localises to the cytoplasm. The catalysed reaction is a 1-O-(1Z-alkenyl)-sn-glycero-3-phosphocholine + H2O = a 2,3-saturated aldehyde + sn-glycerol 3-phosphocholine. It catalyses the reaction a 1-O-(1Z-alkenyl)-sn-glycero-3-phosphoethanolamine + H2O = a 2,3-saturated aldehyde + sn-glycero-3-phosphoethanolamine. Its activity is regulated as follows. Competitively inhibited by lysophosphatidic acid. In terms of biological role, catalyzes the hydrolysis of the vinyl ether bond of choline or ethanolamine lysoplasmalogens, forming fatty aldehyde and glycerophosphocholine or glycerophosphoethanolamine, respectively and is specific for the sn-2-deacylated (lyso) form of plasmalogen. The polypeptide is Lysoplasmalogenase TMEM86B (Tmem86b) (Mus musculus (Mouse)).